A 629-amino-acid chain; its full sequence is Protein EDS1B (629 aa).

The active-site Nucleophile is Ser123. Catalysis depends on charge relay system residues Asp187 and His317.

As to quaternary structure, interacts (via N-terminus) with PAD4 and SAG101. Part of a nuclear complex made of EDS1, PAD4 and SAG101, that can be redirected to the cytoplasm in the presence of an extranuclear form of EDS1. Does not interact with itself or with EDS1.

The protein resides in the nucleus. The protein localises to the cytoplasm. Functionally, acts as a second functional copy of EDS1. Can mediate HRT-mediated resistance to turnip crinkle virus. The protein is Protein EDS1B (EDS1B) of Arabidopsis thaliana (Mouse-ear cress).